The following is a 701-amino-acid chain: MNPVIKTFQFGQSTVTLETGRIARQATGAVLVTVDNDVTVLVTVVGAKQADPGKGFFPLSVHYQEKTYAAGKIPGGFFKREGRPSEKETLTSRLIDRPIRPLFPEGFMNEVQVVCTVVSTSKKTDPDIAAMIGTSAALAISGIPFEGPIGAARVAFHESTGYLLNPTYEQLAASSLDMVVAGTSDAVLMVESEAQELTEDQMLGAVLFAHDEFQAVIQAVKELAAEAGKPTWDWKPAVANTELFNAIRAEFGEAVSQGYTITVKADRYARLGELRDQAVAKFSGEEGQPSASEVKEIFGEIEYRTVRENIVNGKPRIDGRDNKTVRPLNIEVGVLPKTHGSALFTRGETQALVVATLGTARDAQLLDTLEGEKKDPFMLHYNFPPFSVGECGRMGGAGRREIGHGRLARRSVQAMLPAADVFPYTIRVVSEITESNGSSSMASVCGASLALMDAGVPMKAPVAGIAMGLVKEGDKFAVLTDILGDEDHLGDMDFKVAGTAKGVTALQMDIKINGITEEIMEIALGQALEARLNILGQMNQVIGQSRTELSANAPTMIAMKIDTDKIRDVIGKGGATIRAICEETKASIDIEDDGSIKIFGETKEAADAAKQRILGITAEAEIGKIYVGKVERIVDFGAFVNILPGKDGLVHISMLSDARVEKVTDILKEGQEVEVLVLDVDNRGRIKLSIKDVPAAKASGV.

Residues D487 and D493 each contribute to the Mg(2+) site. Residues 554–613 enclose the KH domain; that stretch reads PTMIAMKIDTDKIRDVIGKGGATIRAICEETKASIDIEDDGSIKIFGETKEAADAAKQRI. One can recognise an S1 motif domain in the interval 623-691; sequence GKIYVGKVER…NRGRIKLSIK (69 aa).

It belongs to the polyribonucleotide nucleotidyltransferase family. In terms of assembly, component of the RNA degradosome, which is a multiprotein complex involved in RNA processing and mRNA degradation. The cofactor is Mg(2+).

It is found in the cytoplasm. The enzyme catalyses RNA(n+1) + phosphate = RNA(n) + a ribonucleoside 5'-diphosphate. Involved in mRNA degradation. Catalyzes the phosphorolysis of single-stranded polyribonucleotides processively in the 3'- to 5'-direction. The polypeptide is Polyribonucleotide nucleotidyltransferase (Pseudomonas putida (strain ATCC 47054 / DSM 6125 / CFBP 8728 / NCIMB 11950 / KT2440)).